We begin with the raw amino-acid sequence, 266 residues long: Hydroxymethylpyrimidine/phosphomethylpyrimidine kinase (266 aa).

Gln-43 provides a ligand contact to 4-amino-5-hydroxymethyl-2-methylpyrimidine.

It belongs to the ThiD family.

The enzyme catalyses 4-amino-5-hydroxymethyl-2-methylpyrimidine + ATP = 4-amino-2-methyl-5-(phosphooxymethyl)pyrimidine + ADP + H(+). It catalyses the reaction 4-amino-2-methyl-5-(phosphooxymethyl)pyrimidine + ATP = 4-amino-2-methyl-5-(diphosphooxymethyl)pyrimidine + ADP. Its pathway is cofactor biosynthesis; thiamine diphosphate biosynthesis; 4-amino-2-methyl-5-diphosphomethylpyrimidine from 5-amino-1-(5-phospho-D-ribosyl)imidazole: step 2/3. It functions in the pathway cofactor biosynthesis; thiamine diphosphate biosynthesis; 4-amino-2-methyl-5-diphosphomethylpyrimidine from 5-amino-1-(5-phospho-D-ribosyl)imidazole: step 3/3. Its function is as follows. Catalyzes the phosphorylation of hydroxymethylpyrimidine phosphate (HMP-P) to HMP-PP, and of HMP to HMP-P. In Rhizobium meliloti (strain 1021) (Ensifer meliloti), this protein is Hydroxymethylpyrimidine/phosphomethylpyrimidine kinase (thiD).